The primary structure comprises 899 residues: Protein translocase subunit SecA (899 aa).

Residues Gln-87, 105–109, and Asp-516 each bind ATP; that span reads GEGKT. Zn(2+) is bound by residues Cys-884, Cys-886, Cys-895, and His-896.

It belongs to the SecA family. As to quaternary structure, monomer and homodimer. Part of the essential Sec protein translocation apparatus which comprises SecA, SecYEG and auxiliary proteins SecDF. Other proteins may also be involved. The cofactor is Zn(2+).

Its subcellular location is the cell inner membrane. The protein localises to the cytoplasm. It catalyses the reaction ATP + H2O + cellular proteinSide 1 = ADP + phosphate + cellular proteinSide 2.. Its function is as follows. Part of the Sec protein translocase complex. Interacts with the SecYEG preprotein conducting channel. Has a central role in coupling the hydrolysis of ATP to the transfer of proteins into and across the cell membrane, serving as an ATP-driven molecular motor driving the stepwise translocation of polypeptide chains across the membrane. The chain is Protein translocase subunit SecA from Borreliella afzelii (strain PKo) (Borrelia afzelii).